Reading from the N-terminus, the 1337-residue chain is Multidrug resistance protein fer6 (1337 aa).

The first 23 residues, 1–23 (MTPEASANWFSLCWFAWIDPILT), serve as a signal peptide directing secretion. The N-linked (GlcNAc...) asparagine glycan is linked to asparagine 71. Transmembrane regions (helical) follow at residues 94–114 (FWIG…SPLL) and 138–158 (LGSG…CVFL). In terms of domain architecture, ABC transmembrane type-1 1 spans 95-386 (WIGGLLKLLA…LPIAWNAIVD (292 aa)). Asparagine 187 carries an N-linked (GlcNAc...) asparagine glycan. Transmembrane regions (helical) follow at residues 220–242 (FFHM…IWSL), 247–269 (LPGI…RLFA), 331–351 (ALAF…YALV), and 359–379 (ILFS…FLPI). An ABC transporter 1 domain is found at 417-667 (IQLEDASFTW…KGRVAELLLT (251 aa)). Residues 432 to 460 (ADTAKPVNEKKGQDSPSNEKETPVDRAST) are disordered. A compositionally biased stretch (basic and acidic residues) spans 438–455 (VNEKKGQDSPSNEKETPV). An N-linked (GlcNAc...) asparagine glycan is attached at asparagine 465. 478–485 (GGVGSGKS) is an ATP binding site. The segment at 699–751 (GSASNRNSEASESTTTTVNAESKDTSNAEGVTNKTEKKDLVAPPAQAKSKALM) is disordered. Over residues 700–718 (SASNRNSEASESTTTTVNA) the composition is skewed to low complexity. A glycan (N-linked (GlcNAc...) asparagine) is linked at asparagine 731. A run of 6 helical transmembrane segments spans residues 769 to 789 (YLNA…VLVF), 817 to 837 (GIYA…GVIF), 890 to 909 (AMRT…VLIA), 915 to 933 (FLIP…AAYY), 999 to 1019 (LSVR…ILVV), and 1028 to 1048 (GETG…GWMI). Positions 781-1056 (LFLVAVLVFQ…MIRHAAELEN (276 aa)) constitute an ABC transmembrane type-1 2 domain. A glycan (N-linked (GlcNAc...) asparagine) is linked at asparagine 1057. The ABC transporter 2 domain maps to 1097–1325 (IRFEGVEAKY…EKGAFRALCD (229 aa)). An ATP-binding site is contributed by 1131–1138 (GRTGAGKS). A glycan (N-linked (GlcNAc...) asparagine) is linked at asparagine 1227.

The protein belongs to the ABC transporter superfamily. ABCC family. Conjugate transporter (TC 3.A.1.208) subfamily.

The protein resides in the membrane. In terms of biological role, multidrug resistance protein; part of the gene cluster that mediates the biosynthesis of siderophore ferrichrome A which is contributing to organismal virulence. The sequence is that of Multidrug resistance protein fer6 from Mycosarcoma maydis (Corn smut fungus).